Reading from the N-terminus, the 146-residue chain is Ribosome-binding factor A (146 aa).

A disordered region spans residues 121–146 (KQQQFGSADDVTENDIDEADDTEGKA). Acidic residues predominate over residues 130–146 (DVTENDIDEADDTEGKA).

This sequence belongs to the RbfA family. Monomer. Binds 30S ribosomal subunits, but not 50S ribosomal subunits or 70S ribosomes.

The protein localises to the cytoplasm. One of several proteins that assist in the late maturation steps of the functional core of the 30S ribosomal subunit. Associates with free 30S ribosomal subunits (but not with 30S subunits that are part of 70S ribosomes or polysomes). Required for efficient processing of 16S rRNA. May interact with the 5'-terminal helix region of 16S rRNA. The chain is Ribosome-binding factor A from Shewanella sp. (strain MR-4).